Reading from the N-terminus, the 102-residue chain is MRYGFVRKKHRGLFLTTVAALPIWNPISEFVKWYKSHKLSQHCIRICGHLCQKHLDMFLSVIGQRWPIDVFSSVFDHQVSAIGSDIIWWFLKLFLVSFFFFF.

A run of 2 helical transmembrane segments spans residues Leu13–Trp33 and Ile82–Phe102.

In terms of tissue distribution, expressed in placenta with lower expression in brain, kidney and testis.

The protein resides in the endoplasmic reticulum membrane. The polypeptide is Protein PAPPAS (PAPPA-AS1) (Homo sapiens (Human)).